The sequence spans 400 residues: Bifunctional enzyme IspD/IspF (400 aa).

The tract at residues 1–235 (MSLWTVLLAA…LAEAAAPPVP (235 aa)) is 2-C-methyl-D-erythritol 4-phosphate cytidylyltransferase. The segment at 236–400 (VTGYGYDVHR…VALVSGWRRP (165 aa)) is 2-C-methyl-D-erythritol 2,4-cyclodiphosphate synthase. Asp-242 and His-244 together coordinate a divalent metal cation. Residues 242 to 244 (DVH) and 276 to 277 (HS) contribute to the 4-CDP-2-C-methyl-D-erythritol 2-phosphate site. His-284 provides a ligand contact to a divalent metal cation. 4-CDP-2-C-methyl-D-erythritol 2-phosphate is bound by residues 298–300 (DIG), 303–307 (FPDSN), 374–377 (TTEE), and Phe-381.

In the N-terminal section; belongs to the IspD/TarI cytidylyltransferase family. IspD subfamily. This sequence in the C-terminal section; belongs to the IspF family. A divalent metal cation serves as cofactor.

The catalysed reaction is 2-C-methyl-D-erythritol 4-phosphate + CTP + H(+) = 4-CDP-2-C-methyl-D-erythritol + diphosphate. The enzyme catalyses 4-CDP-2-C-methyl-D-erythritol 2-phosphate = 2-C-methyl-D-erythritol 2,4-cyclic diphosphate + CMP. Its pathway is isoprenoid biosynthesis; isopentenyl diphosphate biosynthesis via DXP pathway; isopentenyl diphosphate from 1-deoxy-D-xylulose 5-phosphate: step 2/6. It participates in isoprenoid biosynthesis; isopentenyl diphosphate biosynthesis via DXP pathway; isopentenyl diphosphate from 1-deoxy-D-xylulose 5-phosphate: step 4/6. Its function is as follows. Bifunctional enzyme that catalyzes the formation of 4-diphosphocytidyl-2-C-methyl-D-erythritol from CTP and 2-C-methyl-D-erythritol 4-phosphate (MEP) (IspD), and catalyzes the conversion of 4-diphosphocytidyl-2-C-methyl-D-erythritol 2-phosphate (CDP-ME2P) to 2-C-methyl-D-erythritol 2,4-cyclodiphosphate (ME-CPP) with a corresponding release of cytidine 5-monophosphate (CMP) (IspF). The polypeptide is Bifunctional enzyme IspD/IspF (Solidesulfovibrio magneticus (strain ATCC 700980 / DSM 13731 / RS-1) (Desulfovibrio magneticus)).